We begin with the raw amino-acid sequence, 134 residues long: Acyl carrier protein, chloroplastic (134 aa).

The N-terminal 51 residues, 1 to 51, are a transit peptide targeting the chloroplast; sequence MATTFSASVSMQATSLATTTRISFQKPVLVSNHGRTNLSFNLSRTRLSISC. One can recognise a Carrier domain in the interval 55 to 130; the sequence is QETVEKVSEI…QAAELIEELM (76 aa). Position 90 is an O-(pantetheine 4'-phosphoryl)serine (Ser90).

It belongs to the acyl carrier protein (ACP) family. In terms of processing, 4'-phosphopantetheine is transferred from CoA to a specific serine of apo-ACP by acpS. This modification is essential for activity because fatty acids are bound in thioester linkage to the sulfhydryl of the prosthetic group. Seed.

It is found in the plastid. It localises to the chloroplast. The protein operates within lipid metabolism; fatty acid biosynthesis. Its function is as follows. Carrier of the growing fatty acid chain in fatty acid biosynthesis. This is Acyl carrier protein, chloroplastic (ACL1.C1) from Brassica napus (Rape).